We begin with the raw amino-acid sequence, 3124 residues long: Collagen alpha-1(XII) chain (3124 aa).

Positions 1–23 (MRTALCSAVAALCAAALLSSIEA) are cleaved as a signal peptide. The Fibronectin type-III 1 domain maps to 27–117 (PPSDLNFTII…GQLTIQTGGP (91 aa)). A glycan (N-linked (GlcNAc...) asparagine) is linked at N32. A VWFA 1 domain is found at 139 to 311 (DLVFLVDGSW…DGIVDIQNEI (173 aa)). O-linked (Xyl...) (chondroitin sulfate) serine glycosylation occurs at S328. A Fibronectin type-III 2 domain is found at 335–424 (PASNLVATQI…ITIMEKTQQV (90 aa)). The region spanning 439–615 (DVVFLVDGSY…RISFELTQSV (177 aa)) is the VWFA 2 domain. Fibronectin type-III domains lie at 633–722 (PAKN…LEVK), 724–815 (APRN…VRGN), 816–906 (PRNL…LEER), 908–998 (SPRN…VSQS), 999–1087 (ARTV…ASPF), and 1089–1179 (PPRN…TLSD). O-linked (Xyl...) (chondroitin sulfate) serine glycosylation is found at S797, S890, and S981. N-linked (GlcNAc...) asparagine glycans are attached at residues N1006, N1032, and N1044. Residues 1075 to 1100 (KSRKAEGTTASPFKPPRNLRTSDSTM) form a disordered region. Residues 1199 to 1371 (DIVLLVDGSW…SFLASIGEDV (173 aa)) form the VWFA 3 domain. Fibronectin type-III domains lie at 1387–1476 (PPSN…YPLS), 1477–1568 (SVRN…LPLP), 1569–1659 (GPRG…VPSP), 1660–1756 (VNLR…TPAP), 1759–1853 (GPRN…TVKN), 1854–1939 (MLVY…LERG), 1940–2030 (TPRN…LPRS), 2031–2121 (GPRN…VGLL), 2122–2210 (PPQN…LYLN), and 2211–2299 (VTDL…LKPT). N-linked (GlcNAc...) asparagine glycosylation is present at N1512. N1767 is a glycosylation site (N-linked (GlcNAc...) asparagine). N-linked (GlcNAc...) asparagine glycans are attached at residues N2210 and N2273. The VWFA 4 domain maps to 2327–2500 (DIVFLTDASW…DAFEKIQDNL (174 aa)). Residues 2455–2750 (SGFSVFVVGV…NACTCTQDSV (296 aa)) are nonhelical region (NC3). Residues 2524 to 2716 (GFKMLESYNL…IQNFDIVCSP (193 aa)) form the Laminin G-like domain. 2 N-linked (GlcNAc...) asparagine glycosylation sites follow: N2532 and N2683. Disordered stretches follow at residues 2749-2900 (SVGP…GDRG) and 2935-3080 (PNDY…EGEP). 3 consecutive Collagen-like domains span residues 2751–2802 (GPPG…GPNG), 2807–2858 (GEPG…GPRG), and 2859–2900 (PPGP…GDRG). The interval 2751–2902 (GPPGPPGPPG…KGEKGDRGDI (152 aa)) is triple-helical region (COL2) with 1 imperfection. Pro residues-rich tracts occupy residues 2752–2761 (PPGPPGPPGG) and 2788–2798 (PPGPQGPPGPQ). The segment covering 2821–2830 (PGLPGRSGTP) has biased composition (low complexity). The span at 2832-2841 (LPGPPGPVGP) shows a compositional bias: pro residues. Low complexity-rich tracts occupy residues 2842 to 2854 (PGER…DGPT) and 2865 to 2878 (APGV…SGKP). The short motif at 2899 to 2901 (RGD) is the Cell attachment site element. The nonhelical region (NC2) stretch occupies residues 2903 to 2945 (ASQNMMRAVARQVCEQLINGQMSRFNQMLNQIPNDYYSNRNQP). Residues 2935 to 2944 (PNDYYSNRNQ) are compositionally biased toward polar residues. Over residues 2945–2954 (PGPPGPPGPP) the composition is skewed to pro residues. The Collagen-like 4 domain occupies 2945–2994 (PGPPGPPGPPGAAGTRGEPGPGGRPGFPGPPGVQGPPGERGMPGEKGERG). The interval 2946–3048 (GPPGPPGPPG…RGPPGPPGYC (103 aa)) is triple-helical region (COL1) with 2 imperfections. Positions 2961-2970 (GEPGPGGRPG) are enriched in gly residues. Residues 3010–3024 (QGESRTGPPGSTGSR) are compositionally biased toward low complexity. The tract at residues 3049 to 3124 (DSSQCASIPY…SLSRKAKRKP (76 aa)) is nonhelical region (NC1).

Belongs to the fibril-associated collagens with interrupted helices (FACIT) family. In terms of assembly, trimer of identical chains each containing 190 kDa of non-triple-helical sequences. Post-translationally, the triple-helical tail is stabilized by disulfide bonds at each end. In terms of processing, prolines at the third position of the tripeptide repeating unit (G-X-Y) are hydroxylated in some or all of the chains. O-glycosylated; glycosaminoglycan of chondroitin-sulfate type. As to expression, type XII collagen is present in tendons, ligaments, perichondrium, and periosteum, all dense connective tissues containing type I collagen.

The protein resides in the secreted. The protein localises to the extracellular space. It localises to the extracellular matrix. Type XII collagen interacts with type I collagen-containing fibrils, the COL1 domain could be associated with the surface of the fibrils, and the COL2 and NC3 domains may be localized in the perifibrillar matrix. The polypeptide is Collagen alpha-1(XII) chain (COL12A1) (Gallus gallus (Chicken)).